A 253-amino-acid chain; its full sequence is Trypsin beta (253 aa).

A signal peptide spans 1 to 22 (MLKFVILLSAVACALGGTIPEG). A propeptide spans 23-30 (LLPQLDGR) (activation peptide). The Peptidase S1 domain maps to 31–253 (IVGGTATTIS…DLRSWVINNA (223 aa)). An intrachain disulfide couples Cys56 to Cys72. Residues His71 and Asp116 each act as charge relay system in the active site. 2 disulfide bridges follow: Cys180–Cys197 and Cys206–Cys230. Residue Ser210 is the Charge relay system of the active site.

It belongs to the peptidase S1 family.

The protein resides in the secreted. It localises to the extracellular space. It catalyses the reaction Preferential cleavage: Arg-|-Xaa, Lys-|-Xaa.. This is Trypsin beta (betaTry) from Drosophila erecta (Fruit fly).